The following is a 342-amino-acid chain: Ribosomal RNA small subunit methyltransferase C (342 aa).

Belongs to the methyltransferase superfamily. RsmC family. In terms of assembly, monomer.

It localises to the cytoplasm. It catalyses the reaction guanosine(1207) in 16S rRNA + S-adenosyl-L-methionine = N(2)-methylguanosine(1207) in 16S rRNA + S-adenosyl-L-homocysteine + H(+). Functionally, specifically methylates the guanine in position 1207 of 16S rRNA in the 30S particle. The polypeptide is Ribosomal RNA small subunit methyltransferase C (Salmonella enteritidis PT4 (strain P125109)).